The sequence spans 340 residues: Glyceraldehyde-3-phosphate dehydrogenase (340 aa).

NAD(+) is bound by residues 11–12 and glycine 109; that span reads TI. Cysteine 123 and cysteine 149 form a disulfide bridge. Position 138-140 (138-140) interacts with D-glyceraldehyde 3-phosphate; sequence SCN. Residue cysteine 139 is the Nucleophile of the active site. Arginine 167 provides a ligand contact to NAD(+). A D-glyceraldehyde 3-phosphate-binding site is contributed by 193 to 194; it reads HA. NAD(+) is bound at residue glutamine 300.

It belongs to the glyceraldehyde-3-phosphate dehydrogenase family. As to quaternary structure, homotetramer.

It is found in the cytoplasm. The catalysed reaction is D-glyceraldehyde 3-phosphate + phosphate + NADP(+) = (2R)-3-phospho-glyceroyl phosphate + NADPH + H(+). The enzyme catalyses D-glyceraldehyde 3-phosphate + phosphate + NAD(+) = (2R)-3-phospho-glyceroyl phosphate + NADH + H(+). Its pathway is carbohydrate degradation; glycolysis; pyruvate from D-glyceraldehyde 3-phosphate: step 1/5. In terms of biological role, can use both NAD and NADP as cofactors, but exhibits a marked preference for NADP. In Saccharolobus solfataricus (strain ATCC 35092 / DSM 1617 / JCM 11322 / P2) (Sulfolobus solfataricus), this protein is Glyceraldehyde-3-phosphate dehydrogenase (gap).